A 128-amino-acid chain; its full sequence is Glycine cleavage system H protein (128 aa).

The region spanning 24–105 (SLTIGVTDHA…AYAAWLFKLK (82 aa)) is the Lipoyl-binding domain. K65 carries the post-translational modification N6-lipoyllysine.

The protein belongs to the GcvH family. The glycine cleavage system is composed of four proteins: P, T, L and H. Requires (R)-lipoate as cofactor.

In terms of biological role, the glycine cleavage system catalyzes the degradation of glycine. The H protein shuttles the methylamine group of glycine from the P protein to the T protein. This Aromatoleum aromaticum (strain DSM 19018 / LMG 30748 / EbN1) (Azoarcus sp. (strain EbN1)) protein is Glycine cleavage system H protein.